The primary structure comprises 202 residues: Ribonuclease HII (202 aa).

In terms of domain architecture, RNase H type-2 spans 12–201; it reads LLIAGVDEAG…VRQLKLFIPE (190 aa). A divalent metal cation-binding residues include D18, E19, and D110.

This sequence belongs to the RNase HII family. It depends on Mn(2+) as a cofactor. Requires Mg(2+) as cofactor.

The protein resides in the cytoplasm. It carries out the reaction Endonucleolytic cleavage to 5'-phosphomonoester.. Its function is as follows. Endonuclease that specifically degrades the RNA of RNA-DNA hybrids. This is Ribonuclease HII from Coxiella burnetii (strain CbuG_Q212) (Coxiella burnetii (strain Q212)).